We begin with the raw amino-acid sequence, 511 residues long: E3 ubiquitin-protein ligase TRIM7 (511 aa).

Residues 29-82 (CSICLELFREPVSVECGHSFCRACIGRCWERPGAGSVGAATRAPPFPLPCPQCR) form an RING-type zinc finger. S107 carries the phosphoserine; by RPS6KA5 modification. A B box-type zinc finger spans residues 125–166 (AAAARCGQHGEPFKLYCQDDGRAICVVCDRAREHREHAVLPL). The Zn(2+) site is built by C130, H133, C152, and H158. A coiled-coil region spans residues 166 to 263 (LDEAVQEAKE…AQLGVEITQL (98 aa)). One can recognise a B30.2/SPRY domain in the interval 324–511 (MLKKFKEDLR…STGTYLRIWP (188 aa)).

This sequence belongs to the TRIM/RBCC family. As to quaternary structure, forms homodimers. Interacts with GNIP2. Interacts with GYG1. Interacts with RNF187 (via C-terminus). In terms of processing, phosphorylated at Ser-107 by RPS6KA5/MSK1, which stimulates the ubiquitin ligase activity. Auto-ubiquitinates via 'Lys-63'-linked polyubiquitination. In terms of tissue distribution, skeletal muscle and placenta, at lower levels in heart, brain and pancreas. Isoform 1 is widely expressed with high level in testis, kidney and heart.

Its subcellular location is the nucleus. The protein localises to the cytoplasm. It is found in the golgi apparatus. The enzyme catalyses S-ubiquitinyl-[E2 ubiquitin-conjugating enzyme]-L-cysteine + [acceptor protein]-L-lysine = [E2 ubiquitin-conjugating enzyme]-L-cysteine + N(6)-ubiquitinyl-[acceptor protein]-L-lysine.. Its pathway is protein modification; protein ubiquitination. Its function is as follows. E3 ubiquitin-protein ligase that have both tumor-promoting and tumor-suppressing activities and functions in several biological processes including innate immunity, regulation of ferroptosis as well as cell proliferation and migration. Acts as an antiviral effector against multiple viruses by targeting specific viral proteins for ubiquitination and degradation including norovirus NTPase protein or SARS-CoV-2 NSP5 and NSP8 proteins. Mechanistically, recognizes the C-terminal glutamine-containing motif usually generated by viral proteases that process the polyproteins and trigger their ubiquitination and subsequent degradation. Mediates 'Lys-63'-linked polyubiquitination and stabilization of the JUN coactivator RNF187 in response to growth factor signaling via the MEK/ERK pathway, thereby regulating JUN transactivation and cellular proliferation. Promotes the TLR4-mediated signaling activation through its E3 ligase domain leading to production of pro-inflammatory cytokines and type I interferon. Also plays a negative role in the regulation of exogenous cytosolic DNA virus-triggered immune response. Mechanistically, enhances the 'Lys-48'-linked ubiquitination of STING1 leading to its proteasome-dependent degradation. Mediates the ubiquitination of the SIN3-HDAC chromatin remodeling complex component BRMS1. Modulates NCOA4-mediated ferritinophagy and ferroptosis in glioblastoma cells by ubiquitinating NCOA4, leading to its degradation. (Microbial infection) Promotes Zika virus replication by mediating envelope protein E ubiquitination. This is E3 ubiquitin-protein ligase TRIM7 (TRIM7) from Homo sapiens (Human).